We begin with the raw amino-acid sequence, 378 residues long: Chaperone protein DnaJ (378 aa).

Positions 5–70 (DYYEVLGVAK…QKRAAYDQYG (66 aa)) constitute a J domain. A CR-type zinc finger spans residues 138 to 216 (GYDTQIRVPS…CHGSGKVKET (79 aa)). Residues cysteine 151, cysteine 154, cysteine 168, cysteine 171, cysteine 190, cysteine 193, cysteine 204, and cysteine 207 each contribute to the Zn(2+) site. 4 CXXCXGXG motif repeats span residues 151–158 (CEVCHGSG), 168–175 (CPTCHGQG), 190–197 (CPKCHGTG), and 204–211 (CAHCHGSG).

Belongs to the DnaJ family. In terms of assembly, homodimer. Zn(2+) serves as cofactor.

It localises to the cytoplasm. In terms of biological role, participates actively in the response to hyperosmotic and heat shock by preventing the aggregation of stress-denatured proteins and by disaggregating proteins, also in an autonomous, DnaK-independent fashion. Unfolded proteins bind initially to DnaJ; upon interaction with the DnaJ-bound protein, DnaK hydrolyzes its bound ATP, resulting in the formation of a stable complex. GrpE releases ADP from DnaK; ATP binding to DnaK triggers the release of the substrate protein, thus completing the reaction cycle. Several rounds of ATP-dependent interactions between DnaJ, DnaK and GrpE are required for fully efficient folding. Also involved, together with DnaK and GrpE, in the DNA replication of plasmids through activation of initiation proteins. The sequence is that of Chaperone protein DnaJ from Burkholderia cenocepacia (strain HI2424).